Consider the following 149-residue polypeptide: Nucleoside diphosphate kinase (149 aa).

The ATP site is built by Lys-9, Phe-57, Arg-85, Thr-91, Arg-102, and Asn-112. His-115 functions as the Pros-phosphohistidine intermediate in the catalytic mechanism.

This sequence belongs to the NDK family. Homotetramer. Requires Mg(2+) as cofactor.

It is found in the cytoplasm. The catalysed reaction is a 2'-deoxyribonucleoside 5'-diphosphate + ATP = a 2'-deoxyribonucleoside 5'-triphosphate + ADP. It catalyses the reaction a ribonucleoside 5'-diphosphate + ATP = a ribonucleoside 5'-triphosphate + ADP. Functionally, major role in the synthesis of nucleoside triphosphates other than ATP. The ATP gamma phosphate is transferred to the NDP beta phosphate via a ping-pong mechanism, using a phosphorylated active-site intermediate. The protein is Nucleoside diphosphate kinase of Cyanothece sp. (strain PCC 7425 / ATCC 29141).